We begin with the raw amino-acid sequence, 391 residues long: NADH-quinone oxidoreductase subunit D (391 aa).

This sequence belongs to the complex I 49 kDa subunit family. As to quaternary structure, NDH-1 is composed of 14 different subunits. Subunits NuoB, C, D, E, F, and G constitute the peripheral sector of the complex.

The protein localises to the cell inner membrane. It catalyses the reaction a quinone + NADH + 5 H(+)(in) = a quinol + NAD(+) + 4 H(+)(out). NDH-1 shuttles electrons from NADH, via FMN and iron-sulfur (Fe-S) centers, to quinones in the respiratory chain. The immediate electron acceptor for the enzyme in this species is believed to be ubiquinone. Couples the redox reaction to proton translocation (for every two electrons transferred, four hydrogen ions are translocated across the cytoplasmic membrane), and thus conserves the redox energy in a proton gradient. The sequence is that of NADH-quinone oxidoreductase subunit D from Rickettsia massiliae (strain Mtu5).